The sequence spans 292 residues: GTP cyclohydrolase FolE2 (292 aa).

Belongs to the GTP cyclohydrolase IV family.

It carries out the reaction GTP + H2O = 7,8-dihydroneopterin 3'-triphosphate + formate + H(+). The protein operates within cofactor biosynthesis; 7,8-dihydroneopterin triphosphate biosynthesis; 7,8-dihydroneopterin triphosphate from GTP: step 1/1. Functionally, converts GTP to 7,8-dihydroneopterin triphosphate. The chain is GTP cyclohydrolase FolE2 from Staphylococcus epidermidis (strain ATCC 12228 / FDA PCI 1200).